Consider the following 168-residue polypeptide: Diphosphoinositol polyphosphate phosphohydrolase 1 (168 aa).

An N-acetylmethionine modification is found at methionine 1. Residues arginine 10, 18 to 20, and 39 to 41 each bind substrate; these read KKR and SSR. One can recognise a Nudix hydrolase domain in the interval 17–142; sequence YKKRAACLCF…KPVQASYFEA (126 aa). Residues glycine 50 and glutamate 66 each contribute to the Mg(2+) site. A Nudix box motif is present at residues 51–72; the sequence is GGMEPEEEPSVAAVREVCEEAG. Catalysis depends on glutamate 69, which acts as the Proton acceptor. Position 70 (glutamate 70) interacts with Mg(2+). Residues 89 to 91, arginine 115, and lysine 133 contribute to the substrate site; that span reads RKH.

Belongs to the Nudix hydrolase family. DIPP subfamily. In terms of assembly, monomer. Mg(2+) is required as a cofactor. The cofactor is Mn(2+). It depends on Zn(2+) as a cofactor.

It is found in the cytoplasm. It localises to the nucleus. It catalyses the reaction diphospho-myo-inositol polyphosphate + H2O = myo-inositol polyphosphate + phosphate.. The enzyme catalyses 5-diphospho-1D-myo-inositol 1,2,3,4,6-pentakisphosphate + H2O = 1D-myo-inositol hexakisphosphate + phosphate + H(+). The catalysed reaction is 3,5-bis(diphospho)-1D-myo-inositol 1,2,4,6-tetrakisphosphate + H2O = 3-diphospho-1D-myo-inositol 1,2,4,5,6-pentakisphosphate + phosphate + 2 H(+). It carries out the reaction [phosphate](n+1) + n H2O = (n+1) phosphate + n H(+). It catalyses the reaction P(1),P(5)-bis(5'-adenosyl) pentaphosphate + H2O = ADP + ATP + 2 H(+). The enzyme catalyses P(1),P(6)-bis(5'-adenosyl) hexaphosphate + H2O = 2 ATP + 2 H(+). The catalysed reaction is P(1),P(4)-bis(5'-adenosyl) tetraphosphate + H2O = AMP + ATP + 2 H(+). It carries out the reaction a 5'-end (N(7)-methyl 5'-triphosphoguanosine)-ribonucleoside in mRNA + H2O = N(7)-methyl-GMP + a 5'-end diphospho-ribonucleoside in mRNA + 2 H(+). It catalyses the reaction a 5'-end (N(7)-methyl 5'-triphosphoguanosine)-ribonucleoside in mRNA + H2O = N(7)-methyl-GDP + a 5'-end phospho-ribonucleoside in mRNA + 2 H(+). With respect to regulation, diphosphoinositol polyphosphate phosphohydrolase is inhibited by fluoride and InsP6. Functionally, cleaves a beta-phosphate from the diphosphate groups in PP-InsP5 (diphosphoinositol pentakisphosphate) and [PP]2-InsP4 (bisdiphosphoinositol tetrakisphosphate), suggesting that it may play a role in signal transduction. InsP6 (inositol hexakisphosphate) is not a substrate. Acts as a negative regulator of the ERK1/2 pathway. Also able to catalyze the hydrolysis of dinucleoside oligophosphates, with diadenosine 5',5'''-P1,P6-hexaphosphate (Ap6A) and diadenosine 5',5'''- P1,P5-pentaphosphate (Ap5A) being the preferred substrates. The major reaction products are ADP and p4a from Ap6A and ADP and ATP from Ap5A. Also able to hydrolyze 5- phosphoribose 1-diphosphate. Acts as a decapping enzyme that can hydrolyze both monomethylated and unmethylated capped RNAs. Hydrolyzes monomethylated capped RNA after both the alpha- and beta-phosphates generating m7GMP + ppRNA and m7GDP + pRNA. Modulates the stability of a subset of mRNAs implicated in cell motility. Divalent cations zinc, magnesium and manganese determine its substrate specificity. Exhibits endopolyphosphatase activity in the presence of zinc ions. Exhibits diphosphoinositol polyphosphate phosphohydrolase in the presence of magnesium ions and diadenosine hexaphosphate hydrolase activity in the presence of manganese ions. Plays an important role in limiting DNA damage and maintaining cell survival upon oxidative stress via its endopolyphosphatase activity. The protein is Diphosphoinositol polyphosphate phosphohydrolase 1 of Rattus norvegicus (Rat).